A 348-amino-acid chain; its full sequence is Protein RecA (348 aa).

64 to 71 (GPESSGKT) serves as a coordination point for ATP. Residues 324–335 (EYEIDGSNKEPL) show a composition bias toward basic and acidic residues. Residues 324-348 (EYEIDGSNKEPLAETEETLSLLDDE) are disordered. A compositionally biased stretch (acidic residues) spans 336–348 (AETEETLSLLDDE).

The protein belongs to the RecA family.

The protein localises to the cytoplasm. Can catalyze the hydrolysis of ATP in the presence of single-stranded DNA, the ATP-dependent uptake of single-stranded DNA by duplex DNA, and the ATP-dependent hybridization of homologous single-stranded DNAs. It interacts with LexA causing its activation and leading to its autocatalytic cleavage. The protein is Protein RecA of Listeria ivanovii.